The chain runs to 948 residues: RNA polymerase-associated protein RapA (948 aa).

The region spanning 164 to 332 is the Helicase ATP-binding domain; that stretch reads EVADRSAPRV…FARLRLLDPN (169 aa). ATP is bound at residue 177 to 184; that stretch reads DEVGLGKT. The DEAH box motif lies at 278 to 281; that stretch reads DEAH. The region spanning 473–627 is the Helicase C-terminal domain; that stretch reads RVDWLIDTLK…TCPTGNALQH (155 aa).

The protein belongs to the SNF2/RAD54 helicase family. RapA subfamily. Interacts with the RNAP. Has a higher affinity for the core RNAP than for the holoenzyme. Its ATPase activity is stimulated by binding to RNAP.

Its function is as follows. Transcription regulator that activates transcription by stimulating RNA polymerase (RNAP) recycling in case of stress conditions such as supercoiled DNA or high salt concentrations. Probably acts by releasing the RNAP, when it is trapped or immobilized on tightly supercoiled DNA. Does not activate transcription on linear DNA. Probably not involved in DNA repair. The polypeptide is RNA polymerase-associated protein RapA (Pseudomonas putida (strain ATCC 47054 / DSM 6125 / CFBP 8728 / NCIMB 11950 / KT2440)).